We begin with the raw amino-acid sequence, 698 residues long: Colicin V secretion/processing ATP-binding protein CvaB (698 aa).

In terms of domain architecture, Peptidase C39 spans 26–145; the sequence is QTETAECGLA…RYFTGVALEV (120 aa). Cysteine 32 is a catalytic residue. A run of 7 helical transmembrane segments spans residues 33–53, 92–112, 176–196, 211–231, 289–311, 315–334, and 412–432; these read GLACLAMICGHFGKNIDLIYL, VLKTPCILHWDFSHFVVLVSV, LAKIFCLSVVIEAINLLMPVG, GLLTLISAALMFFILLKAATS, TSVIGFIMDSIMVVGVCVMMLLY, LTWIVLCFTTIYIFIRLVTY, and IVILWLGAGLVIDNQMTIGMF. The ABC transmembrane type-1 domain maps to 176-458; it reads LAKIFCLSVV…LTSFLLQLRI (283 aa). The region spanning 492-698 is the ABC transporter domain; it reads LETNGLSYRY…LRTVDRVISI (207 aa). An ATP-binding site is contributed by 526–533; sequence GASGAGKT.

Belongs to the ABC transporter superfamily. Colicin V exporter (TC 3.A.1.110.2) family.

It localises to the cell membrane. Involved, in conjunction with CvaA, in the secretion of colicin V. The chain is Colicin V secretion/processing ATP-binding protein CvaB (cvaB) from Escherichia coli.